Reading from the N-terminus, the 326-residue chain is MNFDETVPLSQRLEWSDVVPLTQDDGPNPVVPIAYKEEFRETMDYFRAIYFSDERSPRALRLTEETLLLNSGNYTVWHFRRLVLEALNHDLFEELEFIERIAEDNSKNYQLWHHRRWVAEKLGPDVAGRELEFTRRVLSLDAKHYHAWSHRQWTLRALGGWEDELDYCHELLEADVFNNSAWNQRYYVITQSPLLGGLEAMRESEVSYTIKAILTNPANESSWRYLKALYKDDKESWISDPSVSSVCLNVLSRTDCFHGFALSTLLDLLCDGLRPTNEHKDSVRALANEEPETNLANLVCTILGRVDPVRANYWAWRKSKITVAAI.

5 PFTA repeats span residues Arg55–His89, Asp90–Pro124, Val126–Gly160, Trp161–Leu194, and Met201–Glu235.

It belongs to the protein prenyltransferase subunit alpha family. As to quaternary structure, heterodimer of an alpha and a beta subunit. Mg(2+) serves as cofactor.

The catalysed reaction is L-cysteinyl-[protein] + (2E,6E)-farnesyl diphosphate = S-(2E,6E)-farnesyl-L-cysteinyl-[protein] + diphosphate. It catalyses the reaction geranylgeranyl diphosphate + L-cysteinyl-[protein] = S-geranylgeranyl-L-cysteinyl-[protein] + diphosphate. In terms of biological role, essential subunit of both the farnesyltransferase and the geranylgeranyltransferase complex. Contributes to the transfer of a farnesyl or geranylgeranyl moiety from farnesyl or geranylgeranyl diphosphate to a cysteine at the fourth position from the C-terminus of several proteins having the C-terminal sequence Cys-aliphatic-aliphatic-X. The protein is Protein farnesyltransferase/geranylgeranyltransferase type-1 subunit alpha (FTA) of Arabidopsis thaliana (Mouse-ear cress).